Here is a 541-residue protein sequence, read N- to C-terminus: Eukaryotic translation initiation factor 3 subunit E (541 aa).

The PCI domain occupies 252-443 (VEMFLSPVYL…GMVFMNPTHP (192 aa)). The interval 466–541 (AIDRKAHPPS…QQPAQAIAAN (76 aa)) is disordered. Residues 490–502 (NAGGRGGRGGQRN) show a composition bias toward gly residues. Residues 506–522 (QRDRSHAHNNEAKREGE) show a composition bias toward basic and acidic residues. The span at 523–541 (SASAEEAQQQQPAQAIAAN) shows a compositional bias: low complexity.

The protein belongs to the eIF-3 subunit E family. In terms of assembly, component of the eukaryotic translation initiation factor 3 (eIF-3) complex.

It is found in the cytoplasm. Functionally, component of the eukaryotic translation initiation factor 3 (eIF-3) complex, which is involved in protein synthesis of a specialized repertoire of mRNAs and, together with other initiation factors, stimulates binding of mRNA and methionyl-tRNAi to the 40S ribosome. The eIF-3 complex specifically targets and initiates translation of a subset of mRNAs involved in cell proliferation. This Mycosarcoma maydis (Corn smut fungus) protein is Eukaryotic translation initiation factor 3 subunit E.